The chain runs to 476 residues: Ribulose bisphosphate carboxylase large chain (476 aa).

A propeptide spanning residues 1–2 (MS) is cleaved from the precursor. Residue Pro-3 is modified to N-acetylproline. Position 14 is an N6,N6,N6-trimethyllysine (Lys-14). Substrate-binding residues include Asn-123 and Thr-173. Lys-175 serves as the catalytic Proton acceptor. Residue Lys-177 participates in substrate binding. Positions 201, 203, and 204 each coordinate Mg(2+). An N6-carboxylysine modification is found at Lys-201. The active-site Proton acceptor is His-294. Residues Arg-295, His-327, and Ser-379 each coordinate substrate.

The protein belongs to the RuBisCO large chain family. Type I subfamily. As to quaternary structure, heterohexadecamer of 8 large chains and 8 small chains; disulfide-linked. The disulfide link is formed within the large subunit homodimers. Mg(2+) serves as cofactor. The disulfide bond which can form in the large chain dimeric partners within the hexadecamer appears to be associated with oxidative stress and protein turnover.

Its subcellular location is the plastid. The protein resides in the chloroplast. The catalysed reaction is 2 (2R)-3-phosphoglycerate + 2 H(+) = D-ribulose 1,5-bisphosphate + CO2 + H2O. It catalyses the reaction D-ribulose 1,5-bisphosphate + O2 = 2-phosphoglycolate + (2R)-3-phosphoglycerate + 2 H(+). RuBisCO catalyzes two reactions: the carboxylation of D-ribulose 1,5-bisphosphate, the primary event in carbon dioxide fixation, as well as the oxidative fragmentation of the pentose substrate in the photorespiration process. Both reactions occur simultaneously and in competition at the same active site. The chain is Ribulose bisphosphate carboxylase large chain from Zea mays (Maize).